The primary structure comprises 169 residues: Allophycocyanin subunit beta-18 (169 aa).

Asn72 bears the N4-methylasparagine mark. Cys82 contacts (2R,3E)-phycocyanobilin.

The protein belongs to the phycobiliprotein family. As to quaternary structure, heterodimer of ApcE and this beta chain. Contains one covalently linked bilin chromophore. The chromophore is added by phycocyanobilin lyase CpcUS.

It localises to the cellular thylakoid membrane. Functionally, a variant beta-allophycocyanin (AP) which forms a complex with ApcE, a phycobilisome terminal emitter that influences energy transfer to photosystem II. The sequence is that of Allophycocyanin subunit beta-18 (apcF) from Picosynechococcus sp. (strain ATCC 27264 / PCC 7002 / PR-6) (Agmenellum quadruplicatum).